The following is a 420-amino-acid chain: UDP-N-acetylglucosamine 1-carboxyvinyltransferase (420 aa).

22 to 23 (KN) is a phosphoenolpyruvate binding site. A UDP-N-acetyl-alpha-D-glucosamine-binding site is contributed by arginine 93. The active-site Proton donor is the cysteine 117. The residue at position 117 (cysteine 117) is a 2-(S-cysteinyl)pyruvic acid O-phosphothioketal. The UDP-N-acetyl-alpha-D-glucosamine site is built by aspartate 307 and isoleucine 329.

The protein belongs to the EPSP synthase family. MurA subfamily.

It localises to the cytoplasm. The enzyme catalyses phosphoenolpyruvate + UDP-N-acetyl-alpha-D-glucosamine = UDP-N-acetyl-3-O-(1-carboxyvinyl)-alpha-D-glucosamine + phosphate. Its pathway is cell wall biogenesis; peptidoglycan biosynthesis. Functionally, cell wall formation. Adds enolpyruvyl to UDP-N-acetylglucosamine. In Shewanella halifaxensis (strain HAW-EB4), this protein is UDP-N-acetylglucosamine 1-carboxyvinyltransferase.